The sequence spans 89 residues: Small ribosomal subunit protein uS15 (89 aa).

The protein belongs to the universal ribosomal protein uS15 family. In terms of assembly, part of the 30S ribosomal subunit. Forms a bridge to the 50S subunit in the 70S ribosome, contacting the 23S rRNA.

Functionally, one of the primary rRNA binding proteins, it binds directly to 16S rRNA where it helps nucleate assembly of the platform of the 30S subunit by binding and bridging several RNA helices of the 16S rRNA. Forms an intersubunit bridge (bridge B4) with the 23S rRNA of the 50S subunit in the ribosome. This is Small ribosomal subunit protein uS15 from Thermomicrobium roseum (strain ATCC 27502 / DSM 5159 / P-2).